The chain runs to 349 residues: Protein RecA (349 aa).

An ATP-binding site is contributed by 65–72; the sequence is GPESSGKT.

This sequence belongs to the RecA family.

It localises to the cytoplasm. Can catalyze the hydrolysis of ATP in the presence of single-stranded DNA, the ATP-dependent uptake of single-stranded DNA by duplex DNA, and the ATP-dependent hybridization of homologous single-stranded DNAs. It interacts with LexA causing its activation and leading to its autocatalytic cleavage. This chain is Protein RecA, found in Acinetobacter baumannii (strain AB307-0294).